The following is a 260-amino-acid chain: Glucosamine-6-phosphate deaminase (260 aa).

Residue D67 is the Proton acceptor; for enolization step of the active site. D136 serves as the catalytic For ring-opening step. Residue H138 is the Proton acceptor; for ring-opening step of the active site. E143 (for ring-opening step) is an active-site residue.

The protein belongs to the glucosamine/galactosamine-6-phosphate isomerase family. NagB subfamily.

It catalyses the reaction alpha-D-glucosamine 6-phosphate + H2O = beta-D-fructose 6-phosphate + NH4(+). The protein operates within amino-sugar metabolism; N-acetylneuraminate degradation; D-fructose 6-phosphate from N-acetylneuraminate: step 5/5. In terms of biological role, catalyzes the reversible isomerization-deamination of glucosamine 6-phosphate (GlcN6P) to form fructose 6-phosphate (Fru6P) and ammonium ion. This Arthrobacter sp. (strain FB24) protein is Glucosamine-6-phosphate deaminase.